We begin with the raw amino-acid sequence, 1069 residues long: Adenylate-forming reductase (1069 aa).

The segment at 20–391 (HPEDPKAVKS…WKLRQDINYR (372 aa)) is adenylation (A) domain. Residues H262, 357 to 358 (AH), T362, and 437 to 440 (AVGR) each bind AMP. In terms of domain architecture, Carrier spans 576-656 (DSLEEDLKDL…KLGASLRHLA (81 aa)). S612 is subject to O-(pantetheine 4'-phosphoryl)serine. A reductase (R) domain region spans residues 686–1032 (TVLLTGSTGN…TGKVILDTSR (347 aa)). NADP(+) is bound by residues 693–696 (TGNL), R719, 785–787 (NAW), Y863, and K867.

This sequence belongs to the adenylate-forming reductase family.

It carries out the reaction 5-methylorsellinate + ATP + NADPH + H(+) = 2,4-dihydroxy 5,6-dimethylbenzaldehyde + AMP + diphosphate + NADP(+). It participates in secondary metabolite biosynthesis. Functionally, non-canonical non-ribosomal peptide synthetase; part of the cluster A that mediates the biosynthesis of azasperpyranones, members of the azaphilone family that exhibit anti-cancer activities. Azasperpyranones are synthesized by 2 clusters, A and B. Cluster A is responsible for the production of the polyhydric phenol moiety while the azaphilonoid scaffold is produced by the cluster B. The non-reducing polyketide synthase ATEG_03629 produces 5-methyl orsellinic acid, which is then reduced to 5-methyl orsellinic aldehyde by the NRPS-like protein ATEG_03630. 5-methyl orsellinic aldehyde is then first hydroxylated by the FAD-dependent monooxygenase ATEG_03635 and subsequently hydroxylated by the cytochrome P450 monooxygenase ATEG_03631 to produce the unstable polyhydric phenol precursor of azasperpyranones. On the other hand, the polyketide synthase ATEG_07659 is responsible for producing the 3,5-dimethyloctadienone moiety from acetyl-CoA, three malonyl-CoA, and two S-adenosyl methionines (SAM). The 3,5-dimethyloctadienone moiety is then loaded onto the SAT domain of ATEG_07661 and extended with four malonyl-CoA and one SAM, which leads to the formation of 2,4-dihydroxy-6-(5,7-dimethyl-2-oxo-trans-3-trans-5-nonadienyl)-3-methylbenzaldehyde (compound 8) after reductive release and aldol condensation. The FAD-dependent monooxygenase ATEG_07662 is the next enzyme in the biosynthesis sequence and hydroxylates the side chain at the benzylic position of compound 8. In Aspergillus nidulans, afoF, the ortholog of the FAD-dependent oxygenase ATEG_07660, is the key enzyme for the biosynthesis of asperfuranone by catalyzing the hydroxylation at C-8 of to prevent the formation of a six-membered ring hemiacetal intermediate and thus facilitating the formation of a five-membered ring to produce asperfuranone. In Aspergillus terreus, ATEG_07660 is probably not functional, which leads to the formation of the six-membered ring hemiacetal intermediate presperpyranone instead of asperfuranone. Finally, ATEG_03636 is involved in the condensation of the polyhydric phenol moiety produced by cluster A and the perasperpyranone precursor produced by cluster B, to yield azasperpyranone A. Further modifications of azasperpyranone A result in the production of derivatives, including azasperpyranone B to F. This chain is Adenylate-forming reductase, found in Aspergillus terreus (strain NIH 2624 / FGSC A1156).